We begin with the raw amino-acid sequence, 458 residues long: Bifunctional protein GlmU (458 aa).

Residues 1–230 are pyrophosphorylase; sequence MENRYAIILA…FDEAMGVNDR (230 aa). Residues 9–12, Lys23, Gln73, and 78–79 contribute to the UDP-N-acetyl-alpha-D-glucosamine site; these read LAAG and GT. Residue Asp103 coordinates Mg(2+). The UDP-N-acetyl-alpha-D-glucosamine site is built by Gly140, Glu155, Asn170, and Asn228. Asn228 contacts Mg(2+). Residues 231-251 form a linker region; sequence VALSTANKIMHRRLNEMHMRN. The tract at residues 252 to 458 is N-acetyltransferase; that stretch reads GVTFIDPDTT…YAKKLPYMKD (207 aa). The UDP-N-acetyl-alpha-D-glucosamine site is built by Arg333 and Lys351. Catalysis depends on His363, which acts as the Proton acceptor. UDP-N-acetyl-alpha-D-glucosamine contacts are provided by Tyr366 and Asn377. Residues 386–387, Ser405, Ala423, and Arg440 each bind acetyl-CoA; that span reads NY.

It in the N-terminal section; belongs to the N-acetylglucosamine-1-phosphate uridyltransferase family. The protein in the C-terminal section; belongs to the transferase hexapeptide repeat family. As to quaternary structure, homotrimer. Requires Mg(2+) as cofactor.

The protein resides in the cytoplasm. It carries out the reaction alpha-D-glucosamine 1-phosphate + acetyl-CoA = N-acetyl-alpha-D-glucosamine 1-phosphate + CoA + H(+). The enzyme catalyses N-acetyl-alpha-D-glucosamine 1-phosphate + UTP + H(+) = UDP-N-acetyl-alpha-D-glucosamine + diphosphate. It participates in nucleotide-sugar biosynthesis; UDP-N-acetyl-alpha-D-glucosamine biosynthesis; N-acetyl-alpha-D-glucosamine 1-phosphate from alpha-D-glucosamine 6-phosphate (route II): step 2/2. It functions in the pathway nucleotide-sugar biosynthesis; UDP-N-acetyl-alpha-D-glucosamine biosynthesis; UDP-N-acetyl-alpha-D-glucosamine from N-acetyl-alpha-D-glucosamine 1-phosphate: step 1/1. The protein operates within bacterial outer membrane biogenesis; LPS lipid A biosynthesis. In terms of biological role, catalyzes the last two sequential reactions in the de novo biosynthetic pathway for UDP-N-acetylglucosamine (UDP-GlcNAc). The C-terminal domain catalyzes the transfer of acetyl group from acetyl coenzyme A to glucosamine-1-phosphate (GlcN-1-P) to produce N-acetylglucosamine-1-phosphate (GlcNAc-1-P), which is converted into UDP-GlcNAc by the transfer of uridine 5-monophosphate (from uridine 5-triphosphate), a reaction catalyzed by the N-terminal domain. The sequence is that of Bifunctional protein GlmU from Enterococcus faecalis (strain ATCC 700802 / V583).